The chain runs to 824 residues: Translation initiation factor IF-2 (824 aa).

2 disordered regions span residues 1–32 and 45–232; these read MSDTDGKKTLGLRGGAPRPGNVKQSFSHGRTK and VPKA…MGGQ. Positions 45–57 are enriched in low complexity; it reads VPKAGATTSAGGK. Over residues 86–144 the composition is skewed to basic and acidic residues; sequence KAREAEEEAARIAEEKARAEERERRRAEQEERERAEREREESLKAKAEEDKRRKDEAEA. Positions 145–167 are enriched in low complexity; sequence AAKAAAAPAAEPVVQRPAAKAAP. The span at 170 to 193 shows a compositional bias: basic and acidic residues; that stretch reads APRKQQDRDRDNKRGGKGNDDSRR. The region spanning 321 to 489 is the tr-type G domain; the sequence is TRPPVVTIMG…AIALQAEILE (169 aa). Positions 330–337 are G1; the sequence is GHVDHGKT. GTP is bound at residue 330–337; sequence GHVDHGKT. Residues 355-359 are G2; it reads GITQH. A G3 region spans residues 377–380; sequence DTPG. GTP contacts are provided by residues 377–381 and 431–434; these read DTPGH and NKID. The G4 stretch occupies residues 431–434; that stretch reads NKID. The segment at 467–469 is G5; that stretch reads SAI.

The protein belongs to the TRAFAC class translation factor GTPase superfamily. Classic translation factor GTPase family. IF-2 subfamily.

Its subcellular location is the cytoplasm. One of the essential components for the initiation of protein synthesis. Protects formylmethionyl-tRNA from spontaneous hydrolysis and promotes its binding to the 30S ribosomal subunits. Also involved in the hydrolysis of GTP during the formation of the 70S ribosomal complex. The polypeptide is Translation initiation factor IF-2 (Roseobacter denitrificans (strain ATCC 33942 / OCh 114) (Erythrobacter sp. (strain OCh 114))).